The chain runs to 1281 residues: SCL-interrupting locus protein homolog (1281 aa).

Composition is skewed to polar residues over residues 390–401 (VFKQSPLPNKLS), 461–475 (RNNS…NVNN), 528–560 (HLQS…STVH), 567–592 (EQEQ…SYSR), 770–790 (SKTT…STEQ), and 891–913 (QDIN…NTAE). Disordered stretches follow at residues 390 to 431 (VFKQ…QVSR), 450 to 592 (KSAS…SYSR), 765 to 790 (AESE…STEQ), and 879 to 915 (RDDA…AEID).

Its subcellular location is the cytoplasm. It localises to the cytosol. The protein resides in the cytoskeleton. It is found in the microtubule organizing center. The protein localises to the centrosome. Its subcellular location is the centriole. Functionally, plays an essential role in early embryonic development. Plays an important role in the regulation of centriole duplication. In Xenopus laevis (African clawed frog), this protein is SCL-interrupting locus protein homolog (stil).